Reading from the N-terminus, the 140-residue chain is Histone H2B.1, sperm (140 aa).

The tract at residues 1–47 (MPSQRSPTKRSPTKRSPQKGAGKGGKGSKRGGKARRRGGAAVRRRRR) is disordered. Short sequence motifs (SPKK motif) lie at residues 6–9 (SPTK), 11–14 (SPTK), and 16–19 (SPQK). Basic residues-rich tracts occupy residues 7–17 (PTKRSPTKRSP) and 26–47 (KGSKRGGKARRRGGAAVRRRRR). 2 positions are modified to phosphoserine: Ser-11 and Ser-16. A glycan (O-linked (GlcNAc) serine) is linked at Ser-127. Lys-135 is covalently cross-linked (Glycyl lysine isopeptide (Lys-Gly) (interchain with G-Cter in ubiquitin)).

Belongs to the histone H2B family. As to quaternary structure, the nucleosome is a histone octamer containing two molecules each of H2A, H2B, H3 and H4 assembled in one H3-H4 heterotetramer and two H2A-H2B heterodimers. The octamer wraps approximately 147 bp of DNA. Monoubiquitination of Lys-135 gives a specific tag for epigenetic transcriptional activation and is also prerequisite for histone H3 'Lys-4' and 'Lys-79' methylation. In terms of processing, phosphorylated on SPKK motifs 2 and 3; which may regulate DNA binding. Dephosphorylated during maturation of spermatids to mature sperm and rephosphorylated at fertilization. Post-translationally, glcNAcylation at Ser-127 promotes monoubiquitination of Lys-135. It fluctuates in response to extracellular glucose, and associates with transcribed genes.

Its subcellular location is the nucleus. The protein localises to the chromosome. Functionally, core component of nucleosome. Nucleosomes wrap and compact DNA into chromatin, limiting DNA accessibility to the cellular machineries which require DNA as a template. Histones thereby play a central role in transcription regulation, DNA repair, DNA replication and chromosomal stability. DNA accessibility is regulated via a complex set of post-translational modifications of histones, also called histone code, and nucleosome remodeling. The protein is Histone H2B.1, sperm of Strongylocentrotus purpuratus (Purple sea urchin).